The following is a 467-amino-acid chain: Putative ankyrin repeat protein R911 (467 aa).

ANK repeat units follow at residues 38–70 (IKTD…PIIV), 79–108 (TLNK…DIRA), 109–138 (GNDY…DIRA), 140–168 (NDYA…NIRA), 170–198 (NDHA…DIRS), 199–228 (DNDY…NIRS), 229–258 (DNDY…DIKS), 260–288 (NDYA…NIRV), 289–318 (NNNY…DIIA), 320–348 (NNFA…DIKS), 350–378 (NDYA…DIRV), 379–408 (ENDY…DIRS), 410–438 (NDYA…DIKA), and 440–467 (DDYA…AVLS).

The protein is Putative ankyrin repeat protein R911 of Acanthamoeba polyphaga mimivirus (APMV).